The primary structure comprises 939 residues: Valine--tRNA ligase (939 aa).

Positions 47 to 57 match the 'HIGH' region motif; sequence PNVTGILHMGH. The short motif at 563 to 567 is the 'KMSKS' region element; sequence KLSKS. An ATP-binding site is contributed by K566. Residues 874–939 adopt a coiled-coil conformation; sequence EHLAKERVRL…QSILDKLASL (66 aa).

It belongs to the class-I aminoacyl-tRNA synthetase family. ValS type 1 subfamily. As to quaternary structure, monomer.

Its subcellular location is the cytoplasm. The catalysed reaction is tRNA(Val) + L-valine + ATP = L-valyl-tRNA(Val) + AMP + diphosphate. In terms of biological role, catalyzes the attachment of valine to tRNA(Val). As ValRS can inadvertently accommodate and process structurally similar amino acids such as threonine, to avoid such errors, it has a 'posttransfer' editing activity that hydrolyzes mischarged Thr-tRNA(Val) in a tRNA-dependent manner. The chain is Valine--tRNA ligase from Chlamydia trachomatis serovar L2 (strain ATCC VR-902B / DSM 19102 / 434/Bu).